The chain runs to 87 residues: Mitochondrial import inner membrane translocase subunit TIM8 (87 aa).

A Twin CX3C motif motif is present at residues 44–68 (CFKKCVESVNDSNLSSQEEQCLSNC). Cystine bridges form between C44–C68 and C48–C64.

It belongs to the small Tim family. Heterohexamer; composed of 3 copies of TIM8 and 3 copies of TIM13, named soluble 70 kDa complex. Associates with the TIM22 complex, whose core is composed of TIM18, TIM22 and TIM54. Interacts with the transmembrane regions of multi-pass transmembrane proteins in transit.

It is found in the mitochondrion inner membrane. It localises to the mitochondrion intermembrane space. Functionally, mitochondrial intermembrane chaperone that participates in the import and insertion of some multi-pass transmembrane proteins into the mitochondrial inner membrane. Also required for the transfer of beta-barrel precursors from the TOM complex to the sorting and assembly machinery (SAM complex) of the outer membrane. Acts as a chaperone-like protein that protects the hydrophobic precursors from aggregation and guide them through the mitochondrial intermembrane space. The TIM8-TIM13 complex is non essential and only mediates the import of few proteins under precise conditions, while the predominant TIM9-TIM10 70 kDa complex is crucial and mediates the import of much more proteins. Strictly required for import of TIM23 in some conditions, when a low membrane potential exists in the mitochondria. The polypeptide is Mitochondrial import inner membrane translocase subunit TIM8 (TIM8) (Saccharomyces cerevisiae (strain ATCC 204508 / S288c) (Baker's yeast)).